Here is a 135-residue protein sequence, read N- to C-terminus: MPTINQLIRKERKKVVKKTKSPALVECPQRRGVCTRVYTTTPKKPNSALRKVAKVRLTSKFEVISYIPGEGHNLQEHSIVLVRGGRVKDLPGVKYHIVRGALDTAGVNKRTVSRSKYGTKKAKATDKKATDNKKK.

Asp-89 carries the 3-methylthioaspartic acid modification. The tract at residues 108–135 (NKRTVSRSKYGTKKAKATDKKATDNKKK) is disordered. Basic residues predominate over residues 111 to 122 (TVSRSKYGTKKA). The span at 123–135 (KATDKKATDNKKK) shows a compositional bias: basic and acidic residues.

The protein belongs to the universal ribosomal protein uS12 family. Part of the 30S ribosomal subunit. Contacts proteins S8 and S17. May interact with IF1 in the 30S initiation complex.

Functionally, with S4 and S5 plays an important role in translational accuracy. Interacts with and stabilizes bases of the 16S rRNA that are involved in tRNA selection in the A site and with the mRNA backbone. Located at the interface of the 30S and 50S subunits, it traverses the body of the 30S subunit contacting proteins on the other side and probably holding the rRNA structure together. The combined cluster of proteins S8, S12 and S17 appears to hold together the shoulder and platform of the 30S subunit. The sequence is that of Small ribosomal subunit protein uS12 from Helicobacter pylori (strain P12).